A 293-amino-acid polypeptide reads, in one-letter code: Ribosomal protein L11 methyltransferase (293 aa).

S-adenosyl-L-methionine contacts are provided by threonine 145, glycine 166, aspartate 188, and asparagine 230.

This sequence belongs to the methyltransferase superfamily. PrmA family.

The protein resides in the cytoplasm. The catalysed reaction is L-lysyl-[protein] + 3 S-adenosyl-L-methionine = N(6),N(6),N(6)-trimethyl-L-lysyl-[protein] + 3 S-adenosyl-L-homocysteine + 3 H(+). Functionally, methylates ribosomal protein L11. The protein is Ribosomal protein L11 methyltransferase of Salmonella arizonae (strain ATCC BAA-731 / CDC346-86 / RSK2980).